Here is a 196-residue protein sequence, read N- to C-terminus: Pyridoxal 5'-phosphate synthase subunit PdxT (196 aa).

46–48 (GES) contributes to the L-glutamine binding site. The Nucleophile role is filled by Cys78. Residues Arg110 and 138–139 (IR) each bind L-glutamine. Catalysis depends on charge relay system residues His174 and Glu176.

The protein belongs to the glutaminase PdxT/SNO family. In the presence of PdxS, forms a dodecamer of heterodimers. Only shows activity in the heterodimer.

The enzyme catalyses aldehydo-D-ribose 5-phosphate + D-glyceraldehyde 3-phosphate + L-glutamine = pyridoxal 5'-phosphate + L-glutamate + phosphate + 3 H2O + H(+). The catalysed reaction is L-glutamine + H2O = L-glutamate + NH4(+). It participates in cofactor biosynthesis; pyridoxal 5'-phosphate biosynthesis. Its function is as follows. Catalyzes the hydrolysis of glutamine to glutamate and ammonia as part of the biosynthesis of pyridoxal 5'-phosphate. The resulting ammonia molecule is channeled to the active site of PdxS. This Deinococcus radiodurans (strain ATCC 13939 / DSM 20539 / JCM 16871 / CCUG 27074 / LMG 4051 / NBRC 15346 / NCIMB 9279 / VKM B-1422 / R1) protein is Pyridoxal 5'-phosphate synthase subunit PdxT.